A 55-amino-acid polypeptide reads, in one-letter code: Small ribosomal subunit protein uS14 (55 aa).

4 residues coordinate Zn(2+): Cys20, Cys23, Cys38, and Cys41.

The protein belongs to the universal ribosomal protein uS14 family. Zn(2+) serves as cofactor.

This is Small ribosomal subunit protein uS14 (rps29) from Dictyostelium discoideum (Social amoeba).